The following is a 682-amino-acid chain: Potassium-transporting ATPase ATP-binding subunit (682 aa).

Helical transmembrane passes span Pro-34–Ala-54, Ala-62–Ala-82, Ile-219–Leu-239, and Val-254–Ile-274. Catalysis depends on Asp-307, which acts as the 4-aspartylphosphate intermediate. ATP is bound by residues Asp-344, Glu-348, Phe-377–Ser-384, and Lys-395. Positions 518 and 522 each coordinate Mg(2+). Transmembrane regions (helical) follow at residues Phe-588–Met-608, Ala-616–Leu-636, and Leu-662–Val-682.

Belongs to the cation transport ATPase (P-type) (TC 3.A.3) family. Type IA subfamily. As to quaternary structure, the system is composed of three essential subunits: KdpA, KdpB and KdpC.

It is found in the cell inner membrane. It catalyses the reaction K(+)(out) + ATP + H2O = K(+)(in) + ADP + phosphate + H(+). Its function is as follows. Part of the high-affinity ATP-driven potassium transport (or Kdp) system, which catalyzes the hydrolysis of ATP coupled with the electrogenic transport of potassium into the cytoplasm. This subunit is responsible for energy coupling to the transport system and for the release of the potassium ions to the cytoplasm. The polypeptide is Potassium-transporting ATPase ATP-binding subunit (Enterobacter sp. (strain 638)).